Reading from the N-terminus, the 534-residue chain is UDP-glucuronosyltransferase 1A4 (534 aa).

Positions 1 to 28 (MARGLQVPLPRLATGLLLLLSVQPWAES) are cleaved as a signal peptide. Residues Asn119, Asn142, Asn296, and Asn348 are each glycosylated (N-linked (GlcNAc...) asparagine). The helical transmembrane segment at 492-508 (VIGFLLAVVLTVAFITF) threads the bilayer.

Belongs to the UDP-glycosyltransferase family. Homodimer. Homooligomer. Interacts with UGT1A1, UGT1A3, UGT1A6, UGT1A7, UGT1A8, UGT1A9 and UGT1A10 to form heterodimers. Isoform 1 interacts with isoform 2/i2 suggesting that oligomerization is involved in negative regulation of transferase activity by isoform 2. Isoform 1 also interacts with respective i2 isoforms of UGT1A1, UGT1A3, UGT1A6, UGT1A7, UGT1A8, UGT1A9 and UGT1A10. In terms of tissue distribution, expressed in liver. Expressed in kidney, colon and small intestine. Not expressed in esophagus. Not expressed in skin. As to expression, expressed in liver, kidney, colon, esophagus and small intestine.

The protein resides in the endoplasmic reticulum membrane. The enzyme catalyses glucuronate acceptor + UDP-alpha-D-glucuronate = acceptor beta-D-glucuronoside + UDP + H(+). It carries out the reaction calcidiol + UDP-alpha-D-glucuronate = calcidiol 25-O-(beta-D-glucuronide) + UDP + H(+). It catalyses the reaction calcidiol + UDP-alpha-D-glucuronate = calcidiol 3-O-(beta-D-glucuronide) + UDP + H(+). The catalysed reaction is calcitriol + UDP-alpha-D-glucuronate = calcitriol 25-O-(beta-D-glucuronide) + UDP + H(+). The enzyme catalyses (5Z,8Z,11Z,14Z)-eicosatetraenoate + UDP-alpha-D-glucuronate = O-[(5Z),(8Z),(11Z),(14Z)-eicosatetraenoyl]-beta-D-glucuronate + UDP. It carries out the reaction 15-hydroxy-(5Z,8Z,11Z,13E)-eicosatetraenoate + UDP-alpha-D-glucuronate = 15-O-(beta-D-glucuronosyl)-(5Z,8Z,11Z,14Z)-eicosatetraenoate + UDP + H(+). It catalyses the reaction 20-hydroxy-(5Z,8Z,11Z,14Z)-eicosatetraenoate + UDP-alpha-D-glucuronate = 20-O-(beta-D-glucuronosyl)-(5Z,8Z,11Z,14Z)-eicosatetraenoate + UDP + H(+). UDP-glucuronosyltransferase (UGT) that catalyzes phase II biotransformation reactions in which lipophilic substrates are conjugated with glucuronic acid to increase the metabolite's water solubility, thereby facilitating excretion into either the urine or bile. Essential for the elimination and detoxification of drugs, xenobiotics and endogenous compounds. Involved in the glucuronidation of calcidiol, which is the major circulating form of vitamin D3 essential for the regulation of calcium and phosphate homeostasis. Also glucuronidates the biologically active form of vitamin D3, calcitriol, probably leading to its biliary transport and intestinal reabsorption. Involved in the glucuronidation of arachidonic acid (AA) and AA-derived eicosanoids including 15-HETE, 20-HETE and PGB1. Its function is as follows. Lacks UDP-glucuronosyltransferase (UGT) activity but acts as a negative regulator of isoform 1. This chain is UDP-glucuronosyltransferase 1A4, found in Homo sapiens (Human).